A 594-amino-acid chain; its full sequence is Alanine--tRNA ligase (594 aa).

Histidine 456, histidine 460, cysteine 558, and histidine 562 together coordinate Zn(2+).

This sequence belongs to the class-II aminoacyl-tRNA synthetase family. Zn(2+) is required as a cofactor.

It localises to the cytoplasm. The enzyme catalyses tRNA(Ala) + L-alanine + ATP = L-alanyl-tRNA(Ala) + AMP + diphosphate. Catalyzes the attachment of alanine to tRNA(Ala) in a two-step reaction: alanine is first activated by ATP to form Ala-AMP and then transferred to the acceptor end of tRNA(Ala). Also edits incorrectly charged Ser-tRNA(Ala) and Gly-tRNA(Ala) via its editing domain. This Borreliella afzelii (strain PKo) (Borrelia afzelii) protein is Alanine--tRNA ligase (alaS).